The primary structure comprises 225 residues: Pathogenesis-related thaumatin-like protein 3.8 (225 aa).

Residues 1-26 (MAKVSDLALLLVAGMAISLYIQETGA) form the signal peptide. Cystine bridges form between C35-C224, C76-C86, C91-C97, C139-C213, C144-C197, C152-C162, C166-C175, and C176-C184. N188 carries an N-linked (GlcNAc...) asparagine glycan.

Belongs to the thaumatin family.

Functionally, may be involved in disease resistance. This Cryptomeria japonica (Japanese cedar) protein is Pathogenesis-related thaumatin-like protein 3.8.